A 265-amino-acid chain; its full sequence is Undecaprenyl-diphosphatase (265 aa).

The next 7 membrane-spanning stretches (helical) occupy residues 38–58 (SDMFNIVIQAGAILAVTIIYW), 80–100 (LIVAFLITAILGLVVKKLGFE), 107–127 (PIAWALIIGGIWMIFAEWAAA), 135–155 (ITWLVAILVGIAQIVAGVFPG), 175–195 (AAATEFAFLVGIPTMYAASGY), 213–233 (ALAIAFIVSTIVAFIAVKWLL), and 244–264 (FAIYRIILGVLLLGMATSGLI).

The protein belongs to the UppP family.

It localises to the cell inner membrane. The catalysed reaction is di-trans,octa-cis-undecaprenyl diphosphate + H2O = di-trans,octa-cis-undecaprenyl phosphate + phosphate + H(+). Its function is as follows. Catalyzes the dephosphorylation of undecaprenyl diphosphate (UPP). Confers resistance to bacitracin. The polypeptide is Undecaprenyl-diphosphatase (Rhizobium etli (strain CIAT 652)).